The sequence spans 396 residues: MIKKVTIEKIKSPERFLEVPLLTKEEVGQAIDKVIRQLELNLDYFKEDFPTPATFDNVYPIMDNTEWTNGFWTGELWLAYEYSQQDAFKNIAHKNVLSFLDRVNKRVELDHHDLGFLYTPSCMAEYKINGDGEAREATLKAADKLIERYQEKGGFIQAWGDLGKKEHYRLIIDCLLNIQLLFFAYQETGDQKYYDIAESHFYASANNVIRDDASSFHTFYFDPETGQPFKGVTRQGYSDDSCWARGQSWGVYGIPLTYRHLKDESCFDLFKGVTNYFLNRLPKDHVSYWDLIFNDGSDQSRDSSATAIAVCGIHEMLKHLPEVDADKDIYKHAMHAMLRSLIEHYANDQFTPGGTSLLHGVYSWHSGKGVDEGNIWGDYYYLEALIRFYKDWNLYW.

Asp113 functions as the Nucleophile in the catalytic mechanism. Substrate is bound by residues Asp113, Asp173, Gly231, Thr233, Arg245, Trp249, Ser363, and Ser366. Catalysis depends on Asp173, which acts as the Proton donor.

This sequence belongs to the glycosyl hydrolase 88 family. As to quaternary structure, monomer.

It carries out the reaction beta-D-4-deoxy-Delta(4)-GlcpA-(1-&gt;3)-beta-D-GalpNAc6S + H2O = N-acetyl-beta-D-galactosamine 6-sulfate + 5-dehydro-4-deoxy-D-glucuronate. Functionally, catalyzes the hydrolysis of unsaturated hyaluronate and chondroitin disaccharides. Also degrades unsaturated heparin disaccharides. Releases 4-deoxy-4,5-didehydro D-glucuronic acid or 4-deoxy-4,5-didehydro L-iduronic acid from chondroitin disaccharides, hyaluronan disaccharides and heparin disaccharides and cleaves both glycosidic (1-&gt;3) and (1-&gt;4) bonds. Prefers sulfated glycosaminoglycans compared to unsulfated glycosaminoglycans. Probably required for mammalian cells invasion through the degradation of extracellular sulfated glycosaminoglycans such as chondroitin and hyaluronan. This Streptococcus pneumoniae (strain ATCC BAA-255 / R6) protein is Unsaturated chondroitin disaccharide hydrolase (ugl).